Here is a 492-residue protein sequence, read N- to C-terminus: Ketol-acid reductoisomerase (NADP(+)) (492 aa).

A KARI N-terminal Rossmann domain is found at L17–S208. Residues C45 to Q48, R68, R76, S78, and D108 to Q110 contribute to the NADP(+) site. Residue H132 is part of the active site. An NADP(+)-binding site is contributed by G158. KARI C-terminal knotted domains are found at residues S209–E353 and Y354–M487. Residues D217, E221, E389, and E393 each coordinate Mg(2+). S414 contacts substrate.

The protein belongs to the ketol-acid reductoisomerase family. It depends on Mg(2+) as a cofactor.

It catalyses the reaction (2R)-2,3-dihydroxy-3-methylbutanoate + NADP(+) = (2S)-2-acetolactate + NADPH + H(+). The catalysed reaction is (2R,3R)-2,3-dihydroxy-3-methylpentanoate + NADP(+) = (S)-2-ethyl-2-hydroxy-3-oxobutanoate + NADPH + H(+). It participates in amino-acid biosynthesis; L-isoleucine biosynthesis; L-isoleucine from 2-oxobutanoate: step 2/4. Its pathway is amino-acid biosynthesis; L-valine biosynthesis; L-valine from pyruvate: step 2/4. Its function is as follows. Involved in the biosynthesis of branched-chain amino acids (BCAA). Catalyzes an alkyl-migration followed by a ketol-acid reduction of (S)-2-acetolactate (S2AL) to yield (R)-2,3-dihydroxy-isovalerate. In the isomerase reaction, S2AL is rearranged via a Mg-dependent methyl migration to produce 3-hydroxy-3-methyl-2-ketobutyrate (HMKB). In the reductase reaction, this 2-ketoacid undergoes a metal-dependent reduction by NADPH to yield (R)-2,3-dihydroxy-isovalerate. This Cytophaga hutchinsonii (strain ATCC 33406 / DSM 1761 / CIP 103989 / NBRC 15051 / NCIMB 9469 / D465) protein is Ketol-acid reductoisomerase (NADP(+)).